We begin with the raw amino-acid sequence, 35 residues long: Potassium channel toxin alpha-KTx 23.2 (35 aa).

3 disulfides stabilise this stretch: cysteine 6–cysteine 26, cysteine 12–cysteine 31, and cysteine 16–cysteine 33.

Belongs to the short scorpion toxin superfamily. Potassium channel inhibitor family. Alpha-KTx 23 subfamily. Expressed by the venom gland.

It localises to the secreted. Selectively and irreversibly binds (K(d)=2.9 pM) and blocks Kv1.3/KCNA3 potassium channels of human T-lymphocytes. Weakly blocks Kv1.2/KCNA2 (9%). The protein is Potassium channel toxin alpha-KTx 23.2 of Vaejovis mexicanus smithi (Mexican scorpion).